The sequence spans 406 residues: NADH-quinone oxidoreductase subunit D (406 aa).

This sequence belongs to the complex I 49 kDa subunit family. As to quaternary structure, NDH-1 is composed of 14 different subunits. Subunits NuoB, C, D, E, F, and G constitute the peripheral sector of the complex.

Its subcellular location is the cell inner membrane. It catalyses the reaction a quinone + NADH + 5 H(+)(in) = a quinol + NAD(+) + 4 H(+)(out). NDH-1 shuttles electrons from NADH, via FMN and iron-sulfur (Fe-S) centers, to quinones in the respiratory chain. The immediate electron acceptor for the enzyme in this species is believed to be ubiquinone. Couples the redox reaction to proton translocation (for every two electrons transferred, four hydrogen ions are translocated across the cytoplasmic membrane), and thus conserves the redox energy in a proton gradient. This is NADH-quinone oxidoreductase subunit D from Rhizorhabdus wittichii (strain DSM 6014 / CCUG 31198 / JCM 15750 / NBRC 105917 / EY 4224 / RW1) (Sphingomonas wittichii).